Here is a 741-residue protein sequence, read N- to C-terminus: MAAAEGPVGDGELWQTWLPNHVVFLRLREGLKNQSPTEAEKPASSSLPSSPPPQLLTRNVVFGLGGELFLWDGEDSSFLVVRLRGPSGGGEEPALSQYQRLLCINPPLFEIYQVLLSPTQHHVALIGIKGLMVLELPKRWGKNSEFEGGKSTVNCSTTPVAERFFTSSTSLTLKHAAWYPSEILDPHVVLLTSDNVIRIYSLREPQTPTNVIILSEAEEESLVLNKGRAYTASLGETAVAFDFGPLAAVPKTLFGQNGKDEVVAYPLYILYENGETFLTYISLLHSPGNIGKLLGPLPMHPAAEDNYGYDACAVLCLPCVPNILVIATESGMLYHCVVLEGEEEDDHTSEKSWDSRIDLIPSLYVFECVELELALKLASGEDDPFDSDFSCPVKLHRDPKCPSRYHCTHEAGVHSVGLTWIHKLHKFLGSDEEDKDSLQELSTEQKCFVEHILCTKPLPCRQPAPIRGFWIVPDILGPTMICITSTYECLIWPLLSTVHPASPPLLCTREDVEVAESPLRVLAETPDSFEKHIRSILQRSVANPAFLKASEKDIAPPPEECLQLLSRATQVFREQYILKQDLAKEEIQRRVKLLCDQKKKQLEDLSYCREERKSLREMAERLADKYEEAKEKQEDIMNRMKKLLHSFHSELPVLSDSERDMKKELQLIPDQLRHLGNAIKQVTMKKDYQQQKMEKVLSLPKPTIILSAYQRKCIQSILKEEGEHIREMVKQINDIRNHVNF.

A2 bears the N-acetylalanine mark. S35, S50, S379, S437, S442, and S517 each carry phosphoserine. T525 is modified (phosphothreonine). At S540 the chain carries Phosphoserine. The stretch at E585–L651 forms a coiled coil. S698 carries the phosphoserine modification.

As to quaternary structure, interacts with NUP214/CAN. Interacts with NUP62 and NUP98. Ubiquitous.

Its subcellular location is the nucleus. The protein localises to the nuclear pore complex. Functionally, component of nuclear pore complex. This chain is Nuclear pore complex protein Nup88 (NUP88), found in Homo sapiens (Human).